The primary structure comprises 473 residues: Protein translocase subunit SecD (473 aa).

6 consecutive transmembrane segments (helical) span residues 5–25 (VLVKWAVILVALFASVYLLYP), 316–336 (ASLYGIVIILILMAIYYKSGG), 337–357 (IISNIALILNLVFLLAAMAAF), 364–384 (PGIAGIILSLAMAIDANVLIL), 409–429 (WSAIFDSNFTSWIVALFLFQF), and 436–456 (GFAVTLTLGLLIGVFTSVFVT).

It belongs to the SecD/SecF family. SecD subfamily. As to quaternary structure, forms a complex with SecF. Part of the essential Sec protein translocation apparatus which comprises SecA, SecYEG and auxiliary proteins SecDF. Other proteins may also be involved.

The protein resides in the cell inner membrane. Its function is as follows. Part of the Sec protein translocase complex. Interacts with the SecYEG preprotein conducting channel. SecDF uses the proton motive force (PMF) to complete protein translocation after the ATP-dependent function of SecA. The chain is Protein translocase subunit SecD from Elusimicrobium minutum (strain Pei191).